Consider the following 1397-residue polypeptide: DNA-directed RNA polymerase subunit beta' (1397 aa).

Residues Cys-75, Cys-77, Cys-90, and Cys-93 each coordinate Zn(2+). Mg(2+)-binding residues include Asp-465, Asp-467, and Asp-469. Residues Cys-819, Cys-893, Cys-900, and Cys-903 each coordinate Zn(2+).

The protein belongs to the RNA polymerase beta' chain family. As to quaternary structure, the RNAP catalytic core consists of 2 alpha, 1 beta, 1 beta' and 1 omega subunit. When a sigma factor is associated with the core the holoenzyme is formed, which can initiate transcription. The cofactor is Mg(2+). Zn(2+) serves as cofactor.

It carries out the reaction RNA(n) + a ribonucleoside 5'-triphosphate = RNA(n+1) + diphosphate. Its function is as follows. DNA-dependent RNA polymerase catalyzes the transcription of DNA into RNA using the four ribonucleoside triphosphates as substrates. The polypeptide is DNA-directed RNA polymerase subunit beta' (Acinetobacter baumannii (strain ACICU)).